We begin with the raw amino-acid sequence, 282 residues long: Homeobox protein Hox-C12 (282 aa).

Disordered regions lie at residues 94 to 129 (YYRE…PLEP) and 147 to 214 (GGDG…NSRS). A compositionally biased stretch (low complexity) spans 162 to 175 (SCQSLESDSSSSLL). The homeobox DNA-binding region spans 214–273 (SRKKRKPYSKLQLAELEGEFLVNEFITRQRRRELSDRLNLSDQQVKIWFQNRRMKKKRLL).

Belongs to the Abd-B homeobox family.

Its subcellular location is the nucleus. Functionally, sequence-specific transcription factor which is part of a developmental regulatory system that provides cells with specific positional identities on the anterior-posterior axis. In Homo sapiens (Human), this protein is Homeobox protein Hox-C12 (HOXC12).